Consider the following 1572-residue polypeptide: E3 ubiquitin-protein ligase HECW2 (1572 aa).

Serine 48 carries the phosphoserine modification. Residues 167–301 (GAEGMEGGAS…QAIGDQMLSY (135 aa)) enclose the C2 domain. Disordered regions lie at residues 341–452 (VNSV…SSFP) and 489–796 (IMFS…PSVR). Positions 400 to 410 (TSTSSRTSPPR) are enriched in low complexity. Residues 518–532 (ASTHEAASFEDKPEN) show a composition bias toward basic and acidic residues. Polar residues-rich tracts occupy residues 572-588 (EVDQPTSGADTGTSDAS), 597-614 (ETESLDQGSEPSQVSSET), 643-664 (SSCNESVTTQLSSVDTRCSSLE), and 688-703 (PTSSGPAEGSQESVCT). An interaction with TP73 region spans residues 737–1068 (WQRRGSLEGA…PRPSSTFNTV (332 aa)). Positions 744 to 776 (EGAAAAAESPPQEEGSAGEAQGTCEGATAQEEG) are enriched in low complexity. Positions 807-840 (EALPPNWEARIDSHGRIFYVDHVNRTTTWQRPTA) constitute a WW 1 domain. The stretch at 847 to 874 (LQRSNSIQQMEQLNRRYQSIRRTMTNER) forms a coiled coil. 2 positions are modified to phosphoserine: serine 852 and serine 909. The region spanning 985–1018 (LELPRGWEMKHDHQGKAFFVDHNSRTTTFIDPRL) is the WW 2 domain. Disordered stretches follow at residues 1024–1069 (RPTS…NTVS) and 1161–1187 (CQSPRGSPVSSPQNSPGTQRANARAPA). Basic residues predominate over residues 1031 to 1040 (HRQHLTRQRS). A compositionally biased stretch (polar residues) spans 1161–1181 (CQSPRGSPVSSPQNSPGTQRA). Serine 1175 is modified (phosphoserine). Residues 1237–1572 (SRKDLQRNKL…VEETSTFGLE (336 aa)) form the HECT domain. The active-site Glycyl thioester intermediate is cysteine 1540.

In terms of assembly, interacts with TP73. Interacts with FZR1. In terms of processing, ubiquitinated and degraded during mitotic exit by APC/C-Cdh1. As to expression, predominantly expressed in adult brain, lung and heart.

The protein localises to the cytoplasm. Its subcellular location is the cytoskeleton. It localises to the spindle. The catalysed reaction is S-ubiquitinyl-[E2 ubiquitin-conjugating enzyme]-L-cysteine + [acceptor protein]-L-lysine = [E2 ubiquitin-conjugating enzyme]-L-cysteine + N(6)-ubiquitinyl-[acceptor protein]-L-lysine.. It participates in protein modification; protein ubiquitination. In terms of biological role, E3 ubiquitin-protein ligase that mediates ubiquitination of TP73. Acts to stabilize TP73 and enhance activation of transcription by TP73. Involved in the regulation of mitotic metaphase/anaphase transition. This is E3 ubiquitin-protein ligase HECW2 (HECW2) from Homo sapiens (Human).